We begin with the raw amino-acid sequence, 251 residues long: L-ascorbate peroxidase 2, cytosolic (251 aa).

H43 functions as the Proton acceptor in the catalytic mechanism. Residue H163 coordinates heme b. Residues T164, T180, N182, I185, and D187 each contribute to the K(+) site.

This sequence belongs to the peroxidase family. Ascorbate peroxidase subfamily. Heme b serves as cofactor. As to expression, detected in bundle sheath cells, the photosynthetic cells that surround the phloem and xylem.

It localises to the cytoplasm. The enzyme catalyses L-ascorbate + H2O2 = L-dehydroascorbate + 2 H2O. Functionally, plays a key role in hydrogen peroxide removal. This chain is L-ascorbate peroxidase 2, cytosolic, found in Arabidopsis thaliana (Mouse-ear cress).